The following is a 211-amino-acid chain: Transcriptional regulator GfcR (211 aa).

It belongs to the purine/pyrimidine phosphoribosyltransferase family. GfcR subfamily.

Functionally, DNA-binding transcriptional regulator that functions as a regulator of central sugar catabolic pathways. The sequence is that of Transcriptional regulator GfcR from Halorubrum lacusprofundi (strain ATCC 49239 / DSM 5036 / JCM 8891 / ACAM 34).